The chain runs to 579 residues: Maintenance of mitochondrial morphology protein 1 (579 aa).

Topologically, residues 1-43 are lumenal; that stretch reads MQQPQQQDLQIGLPYAPVQPPIPSPAAYFAYLPSPSRWTFTQG. Residues 44 to 64 form a helical membrane-spanning segment; the sequence is LIVGQVSMVIVALLLIRYVIF. Topologically, residues 65–579 are cytoplasmic; sequence EDSATALEKE…GLRNRPGFVQ (515 aa). Residues 150 to 391 form the SMP-LTD domain; it reads LPESADWLNV…WPRYWSLTLP (242 aa). 3 disordered regions span residues 309–332, 460–479, and 558–579; these read VLPT…RSRH, RPSL…SGLR, and SSVL…GFVQ. 2 stretches are compositionally biased toward low complexity: residues 311 to 328 and 465 to 476; these read PTAN…ATPP and SSRPPHVRSSSS.

Belongs to the MMM1 family. In terms of assembly, homodimer. Component of the ER-mitochondria encounter structure (ERMES) or MDM complex, composed of MMM1, MDM10, MDM12 and MDM34. An MMM1 homodimer associates with one molecule of MDM12 on each side in a pairwise head-to-tail manner, and the SMP-LTD domains of MMM1 and MDM12 generate a continuous hydrophobic tunnel for phospholipid trafficking.

Its subcellular location is the endoplasmic reticulum membrane. Its function is as follows. Component of the ERMES/MDM complex, which serves as a molecular tether to connect the endoplasmic reticulum (ER) and mitochondria. Components of this complex are involved in the control of mitochondrial shape and protein biogenesis, and function in nonvesicular lipid trafficking between the ER and mitochondria. The MDM12-MMM1 subcomplex functions in the major beta-barrel assembly pathway that is responsible for biogenesis of all outer membrane beta-barrel proteins, and acts in a late step after the SAM complex. The MDM10-MDM12-MMM1 subcomplex further acts in the TOM40-specific pathway after the action of the MDM12-MMM1 complex. Essential for establishing and maintaining the structure of mitochondria and maintenance of mtDNA nucleoids. This chain is Maintenance of mitochondrial morphology protein 1, found in Mycosarcoma maydis (Corn smut fungus).